A 2378-amino-acid chain; its full sequence is Dimodular nonribosomal peptide synthase (2378 aa).

Carrier domains follow at residues 961–1036 and 2036–2111; these read APRT…DLAQ and GPRT…EMGS. Ser996 and Ser2071 each carry O-(pantetheine 4'-phosphoryl)serine.

This sequence belongs to the ATP-dependent AMP-binding enzyme family. The cofactor is pantetheine 4'-phosphate.

The catalysed reaction is holo-[peptidyl-carrier protein] + L-threonine + ATP = L-threonyl-[peptidyl-carrier protein] + AMP + diphosphate. The enzyme catalyses holo-[peptidyl-carrier protein] + glycine + ATP = glycyl-[peptidyl-carrier protein] + AMP + diphosphate. It participates in siderophore biosynthesis; bacillibactin biosynthesis. Its function is as follows. Specifically adenylates L-threonine and, to a lesser extent, glycine and covalently loads both amino acids onto their corresponding peptidyl carrier domains. This is Dimodular nonribosomal peptide synthase (dhbF) from Bacillus subtilis (strain 168).